The chain runs to 242 residues: Type III pantothenate kinase (242 aa).

Asp7–Lys14 lines the ATP pocket. Substrate contacts are provided by residues Tyr91 and Gly98–Arg101. Asp100 serves as the catalytic Proton acceptor. Residue Thr121 participates in ATP binding. Thr171 is a substrate binding site.

This sequence belongs to the type III pantothenate kinase family. As to quaternary structure, homodimer. It depends on NH4(+) as a cofactor. Requires K(+) as cofactor.

It is found in the cytoplasm. The catalysed reaction is (R)-pantothenate + ATP = (R)-4'-phosphopantothenate + ADP + H(+). The protein operates within cofactor biosynthesis; coenzyme A biosynthesis; CoA from (R)-pantothenate: step 1/5. Functionally, catalyzes the phosphorylation of pantothenate (Pan), the first step in CoA biosynthesis. The chain is Type III pantothenate kinase from Xanthomonas campestris pv. campestris (strain B100).